A 311-amino-acid chain; its full sequence is tRNA (cytosine(49)-C(5))-methyltransferase (311 aa).

Residues 118 to 124, Asp-142, Asp-169, and Asp-186 each bind S-adenosyl-L-methionine; that span reads AAAPGSK. The Nucleophile role is filled by Cys-239.

The protein belongs to the class I-like SAM-binding methyltransferase superfamily. RsmB/NOP family. As to quaternary structure, forms a tripartite complex with archease and tRNA. Binds only the oligomeric forms of the archease.

It localises to the cytoplasm. It catalyses the reaction cytidine(49) in tRNA precursor + S-adenosyl-L-methionine = 5-methylcytidine(49) in tRNA precursor + S-adenosyl-L-homocysteine + H(+). Substrate specificity and tendency to aggregate are influenced by archease. Catalyzes AdoMet-dependent formation of m5C in tRNA. In the presence of protein archease, specifically methylates the cytosine at position 49 (m5C49) of tRNA. In the absence of archease, catalyzes the formation of m5C at many locations in tRNAs or rRNAs. This chain is tRNA (cytosine(49)-C(5))-methyltransferase, found in Pyrococcus abyssi (strain GE5 / Orsay).